The following is a 208-amino-acid chain: Thymidylate kinase (208 aa).

Position 10–17 (10–17) interacts with ATP; sequence GPEGSGKT.

It belongs to the thymidylate kinase family.

It catalyses the reaction dTMP + ATP = dTDP + ADP. In terms of biological role, phosphorylation of dTMP to form dTDP in both de novo and salvage pathways of dTTP synthesis. The chain is Thymidylate kinase from Bacillus cereus (strain 03BB102).